A 407-amino-acid polypeptide reads, in one-letter code: tRNA-specific 2-thiouridylase MnmA (407 aa).

Residues 20-27 (AMSGGVDS) and Leu-46 contribute to the ATP site. The active-site Nucleophile is Cys-114. The cysteines at positions 114 and 210 are disulfide-linked. Gly-138 is an ATP binding site. An interaction with tRNA region spans residues 160–162 (RDQ). Cys-210 serves as the catalytic Cysteine persulfide intermediate.

Belongs to the MnmA/TRMU family.

The protein resides in the cytoplasm. It carries out the reaction S-sulfanyl-L-cysteinyl-[protein] + uridine(34) in tRNA + AH2 + ATP = 2-thiouridine(34) in tRNA + L-cysteinyl-[protein] + A + AMP + diphosphate + H(+). Catalyzes the 2-thiolation of uridine at the wobble position (U34) of tRNA, leading to the formation of s(2)U34. The chain is tRNA-specific 2-thiouridylase MnmA from Bartonella tribocorum (strain CIP 105476 / IBS 506).